Reading from the N-terminus, the 226-residue chain is tRNA (guanine-N(7)-)-methyltransferase (226 aa).

Residues 1–21 (MTHPQQPHGPLRSFGRLKSRP) form a disordered region. S-adenosyl-L-methionine contacts are provided by Glu-59, Glu-84, Asp-111, and Asp-133. The active site involves Asp-133. Lys-137 is a binding site for substrate. Positions 139–144 (RHNKRR) are interaction with RNA. Residues Asp-169 and 206 to 209 (TRYE) each bind substrate.

The protein belongs to the class I-like SAM-binding methyltransferase superfamily. TrmB family.

The enzyme catalyses guanosine(46) in tRNA + S-adenosyl-L-methionine = N(7)-methylguanosine(46) in tRNA + S-adenosyl-L-homocysteine. Its pathway is tRNA modification; N(7)-methylguanine-tRNA biosynthesis. Functionally, catalyzes the formation of N(7)-methylguanine at position 46 (m7G46) in tRNA. In Caulobacter sp. (strain K31), this protein is tRNA (guanine-N(7)-)-methyltransferase.